The sequence spans 344 residues: Anthranilate phosphoribosyltransferase (344 aa).

5-phospho-alpha-D-ribose 1-diphosphate is bound by residues glycine 85, 88 to 89, threonine 93, 95 to 98, 113 to 121, and serine 125; these read GD, NIST, and KHGGRSVSS. Glycine 85 is an anthranilate binding site. Serine 97 is a binding site for Mg(2+). Anthranilate is bound at residue arginine 171. Mg(2+) is bound by residues aspartate 230 and glutamate 231.

It belongs to the anthranilate phosphoribosyltransferase family. Homodimer. Mg(2+) serves as cofactor.

The catalysed reaction is N-(5-phospho-beta-D-ribosyl)anthranilate + diphosphate = 5-phospho-alpha-D-ribose 1-diphosphate + anthranilate. Its pathway is amino-acid biosynthesis; L-tryptophan biosynthesis; L-tryptophan from chorismate: step 2/5. Its function is as follows. Catalyzes the transfer of the phosphoribosyl group of 5-phosphorylribose-1-pyrophosphate (PRPP) to anthranilate to yield N-(5'-phosphoribosyl)-anthranilate (PRA). The polypeptide is Anthranilate phosphoribosyltransferase (Delftia acidovorans (strain DSM 14801 / SPH-1)).